We begin with the raw amino-acid sequence, 442 residues long: Pyruvate dehydrogenase complex protein X component, mitochondrial (442 aa).

The N-terminal 35 residues, 1 to 35, are a transit peptide targeting the mitochondrion; the sequence is MASLAAACRVSARLAARKLQHDAAVRGFRSSAAAL. The Lipoyl-binding domain occupies 37–113; sequence AQNFMMPALS…QVGTRIAVVA (77 aa). K78 is subject to N6-lipoyllysine. Residues 119–169 are disordered; sequence ITKLEIPPDEGPQQLKAAAPAPAPTPAPAPASPQPQFAAPTPSPPKASTKV. Residues 139 to 151 show a composition bias toward pro residues; that stretch reads APAPTPAPAPASP. Residues 152–169 are compositionally biased toward low complexity; it reads QPQFAAPTPSPPKASTKV. Residues 175–215 form the Peripheral subunit-binding (PSBD) domain; the sequence is PLLPSVHQLIKENGLDESAVSNITPTGPGGRILKGDVLAYL. A disordered region spans residues 244–269; sequence AKPVEPEKPQEEKASAPAPAPRAPEP. A compositionally biased stretch (basic and acidic residues) spans 245–257; the sequence is KPVEPEKPQEEKA. Residues 317–336 form an interaction to the E2 core region; that stretch reads PLPTNYQPTADELFDQVLGL.

This sequence belongs to the 2-oxoacid dehydrogenase family. As to quaternary structure, eukaryotic pyruvate dehydrogenase (PDH) complexes are organized as a core consisting of the oligomeric dihydrolipoamide acetyl-transferase (E2), around which are arranged multiple copies of pyruvate dehydrogenase (E1), dihydrolipoamide dehydrogenase (E3) and protein X (E3BP) bound by non-covalent bonds. The Chaetomium thermophilum PDH complex contains 60 E2 units, 12 E3BP units, about 20 E1 units, and 12 or more E3 units. The units are organized in 1 E2 60-mer, 4 E3BP trimers, about 20 E1 tetramers, and a maximum of 12 E3 dimers. The E3BP trimers are bound inside the icosahedral core with tetrahedral symmetry.

It is found in the mitochondrion. In terms of biological role, the 10-megadalton pyruvate dehydrogenase complex contains multiple copies of three enzymatic components: pyruvate dehydrogenase (E1), dihydrolipoamide acetyltransferase (E2) and lipoamide dehydrogenase (E3) and catalyzes the overall oxidative decarboxylation of pyruvate to form acetyl-CoA and CO(2). E3BP is responsible for tethering E3 in proximity to the core, forming the entire metabolon, and the number of E3s is limited by the number of E3BPs. Within the complex, pyruvate and thiamine pyrophosphate (TPP or vitamin B1) are bound by pyruvate dehydrogenase E1 subunits alpha and beta and pyruvate is decarboxylated leading to the 2-carbon hydrohyethyl bound to TPP. The E2 component contains covalently-bound lipoyl cofactors and transfers the hydroxyethyl group from TPP to an oxidized form of covalently bound lipoamide, and the resulting acetyl group is then transferred to free coenzyme A to form acetyl-CoA and reduced dihydrolipoamide-E2. Finally, the flavoprotein dihydrolipoamide dehydrogenase (E3) re-oxidizes the lipoyl group of dihydrolipoamide-E2 to form lipoamide-E2 and NADH. A fourth subunit, E3BP, is responsible for tethering E3 in proximity to the core, forming the entire metabolon. The sequence is that of Pyruvate dehydrogenase complex protein X component, mitochondrial from Chaetomium thermophilum (strain DSM 1495 / CBS 144.50 / IMI 039719) (Thermochaetoides thermophila).